Here is a 224-residue protein sequence, read N- to C-terminus: ATP phosphoribosyltransferase (224 aa).

Belongs to the ATP phosphoribosyltransferase family. Short subfamily. As to quaternary structure, heteromultimer composed of HisG and HisZ subunits.

It localises to the cytoplasm. The enzyme catalyses 1-(5-phospho-beta-D-ribosyl)-ATP + diphosphate = 5-phospho-alpha-D-ribose 1-diphosphate + ATP. It functions in the pathway amino-acid biosynthesis; L-histidine biosynthesis; L-histidine from 5-phospho-alpha-D-ribose 1-diphosphate: step 1/9. Its function is as follows. Catalyzes the condensation of ATP and 5-phosphoribose 1-diphosphate to form N'-(5'-phosphoribosyl)-ATP (PR-ATP). Has a crucial role in the pathway because the rate of histidine biosynthesis seems to be controlled primarily by regulation of HisG enzymatic activity. This is ATP phosphoribosyltransferase from Cupriavidus metallidurans (strain ATCC 43123 / DSM 2839 / NBRC 102507 / CH34) (Ralstonia metallidurans).